The primary structure comprises 516 residues: High-affinity nitrate transporter 2.3 (516 aa).

The next 12 helical transmembrane spans lie at 52 to 72 (WFSF…LPLI), 76 to 96 (LGLT…GAVF), 112 to 132 (LASA…SIIQ), 142 to 162 (FFTG…SSMF), 172 to 192 (GVAG…MPLV), 209 to 229 (IAFF…LAFG), 265 to 285 (WILA…DNVV), 299 to 319 (TAGL…PGGG), 335 to 354 (LWGL…VLGI), 367 to 387 (VLFS…VPFV), 395 to 415 (ISGM…YIFF), and 425 to 445 (GIKY…LIYF). A disordered region spans residues 489-516 (SVREGGRSSANGGQPRHTVPVDASPAGV).

The protein belongs to the major facilitator superfamily. Nitrate/nitrite porter (TC 2.A.1.8) family. As to quaternary structure, heterotetramer composed of two NRT2.3 and two NAR2.1. Isoform 1 interacts with NAR2.1, but not isoform 2. As to expression, expressed in the stelar cells of both primary and lateral roots, particularly at the site of lateral root emergence, root-shoot junction zone, vascular tissues of adventitious root primordia, leaves, germ tips and seed scutellum.

The protein resides in the cell membrane. Involved in nitrate transport, but does not seem to be able to mediate transport by its own. Acts as a dual component transporter with NAR2.1. Imports nitrate with high affinity when expressed with NAR2.1 in a heterologous system (Xenopus oocytes). Plays a key role in long-distance nitrate transport from root to shoot particularly at low external nitrate supply. This is High-affinity nitrate transporter 2.3 (NRT2.3) from Oryza sativa subsp. japonica (Rice).